The sequence spans 152 residues: Lipoprotein signal peptidase (152 aa).

A run of 3 helical transmembrane segments spans residues 5–25 (LFVL…FWIV), 61–81 (WFFV…LATH), and 84–104 (LNIW…GNFI). Catalysis depends on residues Asp-114 and Asp-130. The helical transmembrane segment at 125-145 (IFNVADSYLTVGVILLVICLW) threads the bilayer.

It belongs to the peptidase A8 family.

The protein localises to the cell membrane. The catalysed reaction is Release of signal peptides from bacterial membrane prolipoproteins. Hydrolyzes -Xaa-Yaa-Zaa-|-(S,diacylglyceryl)Cys-, in which Xaa is hydrophobic (preferably Leu), and Yaa (Ala or Ser) and Zaa (Gly or Ala) have small, neutral side chains.. It functions in the pathway protein modification; lipoprotein biosynthesis (signal peptide cleavage). In terms of biological role, this protein specifically catalyzes the removal of signal peptides from prolipoproteins. The chain is Lipoprotein signal peptidase from Streptococcus pyogenes serotype M18 (strain MGAS8232).